The primary structure comprises 321 residues: Ribosomal RNA small subunit methyltransferase H (321 aa).

S-adenosyl-L-methionine contacts are provided by residues 33 to 35 (AGH), Asp58, Phe85, Asp111, and Gln118.

The protein belongs to the methyltransferase superfamily. RsmH family.

Its subcellular location is the cytoplasm. It carries out the reaction cytidine(1402) in 16S rRNA + S-adenosyl-L-methionine = N(4)-methylcytidine(1402) in 16S rRNA + S-adenosyl-L-homocysteine + H(+). In terms of biological role, specifically methylates the N4 position of cytidine in position 1402 (C1402) of 16S rRNA. This is Ribosomal RNA small subunit methyltransferase H from Chloroherpeton thalassium (strain ATCC 35110 / GB-78).